Here is a 539-residue protein sequence, read N- to C-terminus: Phosphoenolpyruvate carboxykinase (ATP) (539 aa).

Residues Arg64, Tyr206, and Lys212 each coordinate substrate. Residues Lys212, His231, and Gly247–Thr255 contribute to the ATP site. Lys212 and His231 together coordinate Mn(2+). Residue Asp268 coordinates Mn(2+). ATP contacts are provided by residues Glu296, Arg332, Arg448–Ile449, and Thr454. Position 332 (Arg332) interacts with substrate.

It belongs to the phosphoenolpyruvate carboxykinase (ATP) family. As to quaternary structure, monomer. Mn(2+) is required as a cofactor.

It localises to the cytoplasm. The catalysed reaction is oxaloacetate + ATP = phosphoenolpyruvate + ADP + CO2. Its pathway is carbohydrate biosynthesis; gluconeogenesis. Functionally, involved in the gluconeogenesis. Catalyzes the conversion of oxaloacetate (OAA) to phosphoenolpyruvate (PEP) through direct phosphoryl transfer between the nucleoside triphosphate and OAA. The polypeptide is Phosphoenolpyruvate carboxykinase (ATP) (Pectobacterium atrosepticum (strain SCRI 1043 / ATCC BAA-672) (Erwinia carotovora subsp. atroseptica)).